The sequence spans 71 residues: MPVIKVRENESFDVALRRFKRSCEKAGILAEVRSREFYEKPTTIRKRENATRAKRHAKRVARENARNTRLY.

Positions 47–71 are disordered; sequence RENATRAKRHAKRVARENARNTRLY. Residues 60–71 are compositionally biased toward basic and acidic residues; sequence VARENARNTRLY.

This sequence belongs to the bacterial ribosomal protein bS21 family.

This chain is Small ribosomal subunit protein bS21, found in Histophilus somni (strain 129Pt) (Haemophilus somnus).